The following is a 426-amino-acid chain: Serine--tRNA ligase (426 aa).

Residue 231–233 participates in L-serine binding; it reads TAE. 262–264 is a binding site for ATP; the sequence is RSE. Position 285 (Glu285) interacts with L-serine. 349-352 contacts ATP; that stretch reads EISS. Ser384 is a binding site for L-serine.

It belongs to the class-II aminoacyl-tRNA synthetase family. Type-1 seryl-tRNA synthetase subfamily. Homodimer. The tRNA molecule binds across the dimer.

The protein resides in the cytoplasm. The catalysed reaction is tRNA(Ser) + L-serine + ATP = L-seryl-tRNA(Ser) + AMP + diphosphate + H(+). The enzyme catalyses tRNA(Sec) + L-serine + ATP = L-seryl-tRNA(Sec) + AMP + diphosphate + H(+). Its pathway is aminoacyl-tRNA biosynthesis; selenocysteinyl-tRNA(Sec) biosynthesis; L-seryl-tRNA(Sec) from L-serine and tRNA(Sec): step 1/1. Its function is as follows. Catalyzes the attachment of serine to tRNA(Ser). Is also able to aminoacylate tRNA(Sec) with serine, to form the misacylated tRNA L-seryl-tRNA(Sec), which will be further converted into selenocysteinyl-tRNA(Sec). This chain is Serine--tRNA ligase, found in Laribacter hongkongensis (strain HLHK9).